Here is a 475-residue protein sequence, read N- to C-terminus: Cysteine--tRNA ligase (475 aa).

Cys-28 contacts Zn(2+). A 'HIGH' region motif is present at residues Pro-30–His-40. Zn(2+) contacts are provided by Cys-208, His-233, and Glu-237. Residues Lys-265–Ser-269 carry the 'KMSKS' region motif. An ATP-binding site is contributed by Lys-268.

It belongs to the class-I aminoacyl-tRNA synthetase family. The cofactor is Zn(2+).

Its subcellular location is the cytoplasm. The catalysed reaction is tRNA(Cys) + L-cysteine + ATP = L-cysteinyl-tRNA(Cys) + AMP + diphosphate. The polypeptide is Cysteine--tRNA ligase (Methanococcus vannielii (strain ATCC 35089 / DSM 1224 / JCM 13029 / OCM 148 / SB)).